A 263-amino-acid polypeptide reads, in one-letter code: Caveolae-associated protein 3 (263 aa).

Residues 1–84 (MGESALEPGP…SNTLAQLLAK (84 aa)) are interaction with CAVIN1. The segment at 20–78 (VHAVTVVTLLEKLATMLEALRERQGGLAERQGGLAGSVRRIQSGLGALSRSHDTTSNTL) is leucine-zipper. Phosphoserine is present on residues serine 62 and serine 70. Residue lysine 128 forms a Glycyl lysine isopeptide (Lys-Gly) (interchain with G-Cter in SUMO2) linkage. An interaction with CAV1 region spans residues 135–203 (ARAFQKAPEL…SSRKGSEAAQ (69 aa)). The segment at 141–263 (APELLGPEDQ…RPVLQIESAA (123 aa)) is disordered. Acidic residues predominate over residues 157 to 170 (QPEDEVGESSDEEP). Phosphoserine is present on residues serine 165, serine 166, serine 173, and serine 199. Residues 219-234 (EGPAEGQPAAQPAMEP) are compositionally biased toward low complexity.

The protein belongs to the CAVIN family. Component of the CAVIN complex composed of CAVIN1, CAVIN2, CAVIN3 and CAVIN4. Interacts with PRKCD and with phosphatidylserine. Phosphatidylserine may form a bridge between PKC and PKC-binding partners and stabilize the binding. Interacts with PER2. Interacts with CAVIN1 and EPS15L1. Interacts (via leucine-zipper domain) with CAV1 in a cholesterol-sensitive manner. In terms of processing, in vitro, phosphorylated by PRKCD.

The protein localises to the cytoplasm. The protein resides in the membrane. Its subcellular location is the caveola. It is found in the cytosol. Its function is as follows. Regulates the traffic and/or budding of caveolae. Plays a role in caveola formation in a tissue-specific manner. Required for the formation of caveolae in smooth muscle but not in the lung and heart endothelial cells. Regulates the equilibrium between cell surface-associated and cell surface-dissociated caveolae by promoting the rapid release of caveolae from the cell surface. Plays a role in the regulation of the circadian clock. Modulates the period length and phase of circadian gene expression and also regulates expression and interaction of the core clock components PER1/2 and CRY1/2. Seems to have an immune potentiation function, especially in the glioma. The sequence is that of Caveolae-associated protein 3 from Rattus norvegicus (Rat).